The sequence spans 347 residues: GMP reductase (347 aa).

108-131 (ADFQKTKDIMALTDDLIFICVDIA) contacts NADP(+). Positions 181 and 183 each coordinate K(+). Cys-186 functions as the Thioimidate intermediate in the catalytic mechanism. 216-239 (IIGDGGCSCAGDVSKAFGGGADFV) provides a ligand contact to NADP(+).

This sequence belongs to the IMPDH/GMPR family. GuaC type 1 subfamily. In terms of assembly, homotetramer.

It catalyses the reaction IMP + NH4(+) + NADP(+) = GMP + NADPH + 2 H(+). Catalyzes the irreversible NADPH-dependent deamination of GMP to IMP. It functions in the conversion of nucleobase, nucleoside and nucleotide derivatives of G to A nucleotides, and in maintaining the intracellular balance of A and G nucleotides. The polypeptide is GMP reductase (Aliivibrio salmonicida (strain LFI1238) (Vibrio salmonicida (strain LFI1238))).